Here is a 1086-residue protein sequence, read N- to C-terminus: Rh5-interacting protein (1086 aa).

Positions 1–19 (MFRIFFTLLIIILIKKTSA) are cleaved as a signal peptide. N103, N144, N228, N303, N334, N480, N498, N506, N526, and N646 each carry an N-linked (GlcNAc...) asparagine glycan. 2 consecutive EGF-like domains span residues 287–321 (RCTQDICSVNQFCDGENETCTCKTSLLPSAKNNCE) and 325–362 (LCTVLNCPENSTCEQIGNGKKAECKCENGKYYHNNKCY). EGF-like domains lie at 636–675 (SCSNLCNKCHNNSTCYGNRFNYDCFCDNPYISKYGNKLCE), 679–715 (DCESVLCSQNQVCQILPNDKLICQCEEGYKNVKGKCV), 719–753 (KCDLSCPSNKVCVIENGKQTCKCSERFVLENGVCI), 818–854 (YCKDINCKENEECSIVNFKPECVCKENLKKNNKGECI), 858–897 (SCLINEGNCPKDSKCIYREYKPHECVCNKQGHVAVNGKCV), 901–938 (KCVHNKKCSENSICVNVMNKEPICVCTYNYYKKDGVCL), and 942–979 (PCLKDNGGCSRNSECTFKYSKINCTCKENYKNKDDSCV). Residues N964 and N1021 are each glycosylated (N-linked (GlcNAc...) asparagine).

In terms of assembly, component of the PfRH5 adhesion complex composed of 1 copy of CyRPA, RH5 and RIPR; the complex is formed during merozoite invasion of host erythrocytes specifically at the interface between the parasite and host membranes. Within the complex, interacts with CyRPA. CyRPA recruitment of RIPR to RH5-P113-BSG leads to the formation of the PfRH5 adhesion complex which probably in turn releases RH5 from P113 while maintaining the interaction of the PfRH5 adhesion complex with BSG. Post-translationally, proteolytically cleaved into two chains of 125kDa and 65kDa which remain associated. The cleavage occurs at the schizont stage prior to the release of merozoites. In terms of processing, contains disulfide bonds.

Its subcellular location is the secreted. It is found in the cytoplasmic vesicle. The protein localises to the secretory vesicle. The protein resides in the microneme lumen. It localises to the cell membrane. Its subcellular location is the host cell membrane. Essential for the invasion of host erythrocytes by blood stage merozoites. As part of the PfRH5 adhesion complex, facilitates the interaction of RH5 and human BSG required for the Ca(2+) release into the erythrocyte. The polypeptide is Rh5-interacting protein (RIPR) (Plasmodium falciparum (isolate 3D7)).